Consider the following 390-residue polypeptide: Altered inheritance of mitochondria protein 6 (390 aa).

Positions 1–17 are cleaved as a signal peptide; the sequence is MLGLKGCLTILIGYVIA.

It belongs to the AIM6 family.

This chain is Altered inheritance of mitochondria protein 6, found in Saccharomyces cerevisiae (strain ATCC 204508 / S288c) (Baker's yeast).